The sequence spans 699 residues: Elongation factor G (699 aa).

The tr-type G domain maps to 8 to 288 (EDYRNFGIMA…AVVDYLPSPM (281 aa)). GTP contacts are provided by residues 17 to 24 (AHIDAGKT), 86 to 90 (DTPGH), and 140 to 143 (NKMD).

It belongs to the TRAFAC class translation factor GTPase superfamily. Classic translation factor GTPase family. EF-G/EF-2 subfamily.

Its subcellular location is the cytoplasm. Its function is as follows. Catalyzes the GTP-dependent ribosomal translocation step during translation elongation. During this step, the ribosome changes from the pre-translocational (PRE) to the post-translocational (POST) state as the newly formed A-site-bound peptidyl-tRNA and P-site-bound deacylated tRNA move to the P and E sites, respectively. Catalyzes the coordinated movement of the two tRNA molecules, the mRNA and conformational changes in the ribosome. The protein is Elongation factor G of Rhizobium leguminosarum bv. trifolii (strain WSM2304).